A 491-amino-acid polypeptide reads, in one-letter code: UDP-glycosyltransferase 73C1 (491 aa).

Residues S292, 352–354, 369–377, and 391–394 contribute to the UDP-alpha-D-glucose site; these read SPQ, HCGWNSTLE, and FGDQ.

The protein belongs to the UDP-glycosyltransferase family.

Functionally, involved in the O-glucosylation of trans-zeatin and dihydrozeatin. Also active in vitro on cis-zeatin, dihydrozeatin-9-N-Glc, and olomoucine. Can detoxify the explosive 2,4,6-trinitrotoluene in plant by forming O- or C-glucose conjugates. In Arabidopsis thaliana (Mouse-ear cress), this protein is UDP-glycosyltransferase 73C1 (UGT73C1).